A 367-amino-acid chain; its full sequence is Aminomethyltransferase (367 aa).

The protein belongs to the GcvT family. In terms of assembly, the glycine cleavage system is composed of four proteins: P, T, L and H.

The catalysed reaction is N(6)-[(R)-S(8)-aminomethyldihydrolipoyl]-L-lysyl-[protein] + (6S)-5,6,7,8-tetrahydrofolate = N(6)-[(R)-dihydrolipoyl]-L-lysyl-[protein] + (6R)-5,10-methylene-5,6,7,8-tetrahydrofolate + NH4(+). The glycine cleavage system catalyzes the degradation of glycine. The chain is Aminomethyltransferase from Mycobacterium bovis (strain ATCC BAA-935 / AF2122/97).